Here is a 305-residue protein sequence, read N- to C-terminus: Methionyl-tRNA formyltransferase (305 aa).

111 to 114 lines the (6S)-5,6,7,8-tetrahydrofolate pocket; it reads SLLP.

This sequence belongs to the Fmt family.

The catalysed reaction is L-methionyl-tRNA(fMet) + (6R)-10-formyltetrahydrofolate = N-formyl-L-methionyl-tRNA(fMet) + (6S)-5,6,7,8-tetrahydrofolate + H(+). Functionally, attaches a formyl group to the free amino group of methionyl-tRNA(fMet). The formyl group appears to play a dual role in the initiator identity of N-formylmethionyl-tRNA by promoting its recognition by IF2 and preventing the misappropriation of this tRNA by the elongation apparatus. This chain is Methionyl-tRNA formyltransferase, found in Campylobacter jejuni subsp. jejuni serotype O:23/36 (strain 81-176).